Here is a 393-residue protein sequence, read N- to C-terminus: Methylthioribose kinase (393 aa).

ATP contacts are provided by residues N38, K53, and 107 to 109 (EDL). Substrate is bound at residue D225. 242 to 244 (DPE) contributes to the ATP binding site. R332 contributes to the substrate binding site.

It belongs to the methylthioribose kinase family. As to quaternary structure, homodimer.

The enzyme catalyses 5-(methylsulfanyl)-D-ribose + ATP = 5-(methylsulfanyl)-alpha-D-ribose 1-phosphate + ADP + H(+). It participates in amino-acid biosynthesis; L-methionine biosynthesis via salvage pathway; S-methyl-5-thio-alpha-D-ribose 1-phosphate from S-methyl-5'-thioadenosine (hydrolase route): step 2/2. Functionally, catalyzes the phosphorylation of methylthioribose into methylthioribose-1-phosphate. This chain is Methylthioribose kinase, found in Bacillus cereus (strain ATCC 14579 / DSM 31 / CCUG 7414 / JCM 2152 / NBRC 15305 / NCIMB 9373 / NCTC 2599 / NRRL B-3711).